A 2320-amino-acid chain; its full sequence is Bromodomain and WD repeat-containing protein 1 (2320 aa).

WD repeat units lie at residues 184–223 (GHLS…LLST), 226–265 (GHSA…PVAV), 268–311 (GHTG…LKFS), 322–365 (RPGV…AELE), 366–405 (SHTD…WRSI), 424–463 (FMKP…LLHN), 466–506 (GHAD…KMKH), and 514–553 (QGHG…PYEK). The interval 668–691 (QRMGADQDTIPRGLSNGEETPRRG) is disordered. A Phosphothreonine modification is found at Thr-687. Phosphoserine is present on residues Ser-696, Ser-701, and Ser-710. Disordered stretches follow at residues 809 to 867 (NRSW…RYSD) and 895 to 925 (SEDE…ENLR). Low complexity-rich tracts occupy residues 814-824 (ELSSGNESSSS) and 854-867 (YSES…RYSD). Over residues 907-918 (PKRRRKRKKENK) the composition is skewed to basic residues. Residues 1157–1264 (WGQKSRDEEC…DQLLKFIKNQ (108 aa)) form the Bromo 1 domain. The interval 1271–1304 (ELSNTSENDEQNAEDLDDSDLPKTSSGRRRVHDG) is disordered. Residues 1277–1289 (ENDEQNAEDLDDS) are compositionally biased toward acidic residues. A Phosphoserine modification is found at Ser-1289. One can recognise a Bromo 2 domain in the interval 1313–1418 (YVESNWKKQC…ALFEEKMKKI (106 aa)). The interval 1434–1593 (RSQRFKQRQN…TGPVSLANGC (160 aa)) is disordered. Polar residues predominate over residues 1443 to 1454 (NCKGDSQPNKSI). Basic residues predominate over residues 1455-1464 (RNLKPKRLKS). A Phosphoserine modification is found at Ser-1475. Polar residues predominate over residues 1475-1496 (SPTQSTSSRTAYLGTHKTSAGI). Thr-1477 bears the Phosphothreonine mark. Ser-1479 bears the Phosphoserine mark. Residues 1497 to 1509 (SSGVTSGDSSDSA) are compositionally biased toward low complexity. Polar residues predominate over residues 1520 to 1529 (PITNGSTLSE). The segment covering 1535-1548 (SLATSLSSSASSSS) has biased composition (low complexity). Over residues 1549–1561 (EESKESSRARESS) the composition is skewed to basic and acidic residues. Phosphoserine is present on residues Ser-1605, Ser-1607, Ser-1678, Ser-1683, and Ser-1686. Disordered regions lie at residues 1670 to 1805 (ARKK…KYNT), 1817 to 1839 (KILS…KCHK), and 1862 to 1899 (DHGC…KISR). The span at 1676–1687 (HNSEDEQSLKSE) shows a compositional bias: basic and acidic residues. A compositionally biased stretch (polar residues) spans 1701–1712 (PVSSSHTAQSNV). Composition is skewed to basic and acidic residues over residues 1715–1728 (SENR…DLRV) and 1751–1769 (LKIE…DHAC). Phosphoserine occurs at positions 1755, 1756, 1786, 1788, 1793, and 1820. The segment covering 1821–1832 (DSEDSESEEQDR) has biased composition (acidic residues). Residue Thr-1867 is modified to Phosphothreonine. A phosphoserine mark is found at Ser-1871, Ser-1904, Ser-1905, Ser-1907, Ser-1910, and Ser-1943. A Phosphothreonine modification is found at Thr-1955. 2 disordered regions span residues 2014 to 2077 (LNGD…TLAQ) and 2112 to 2184 (TKVI…TKGK). 3 positions are modified to phosphoserine: Ser-2018, Ser-2020, and Ser-2052. 2 stretches are compositionally biased toward basic and acidic residues: residues 2054 to 2069 (EDSK…DRTF) and 2114 to 2139 (VIHD…ENVK). Residues 2140-2165 (ISETTGNSKFRPDTSSKSSDLGSVTE) are compositionally biased toward polar residues. Thr-2164 carries the post-translational modification Phosphothreonine. Phosphoserine occurs at positions 2166 and 2214.

In terms of assembly, interacts with SMARCA4. As to expression, ubiquitously expressed. Expressed in respiratory epithelial cells and testis spermatozoa.

The protein localises to the cytoplasm. Its subcellular location is the nucleus. It localises to the cell projection. The protein resides in the cilium membrane. It is found in the cytoskeleton. The protein localises to the flagellum axoneme. May be a transcriptional activator. May be involved in chromatin remodeling. Plays a role in the regulation of cell morphology and cytoskeletal organization. Required in the control of cell shape. This chain is Bromodomain and WD repeat-containing protein 1 (BRWD1), found in Homo sapiens (Human).